The sequence spans 324 residues: Mitochondrial thiamine pyrophosphate carrier 1 (324 aa).

3 Solcar repeats span residues 12 to 110 (GNRI…ISSA), 119 to 205 (PQPV…LRSP), and 212 to 307 (PFGT…VLGL). A run of 6 helical transmembrane segments spans residues 15–35 (IQVV…VAPL), 79–99 (ITGL…YGGI), 125–145 (FISG…LDLL), 182–202 (TAAI…YEAL), 218–238 (AGAG…LDLV), and 282–299 (GLTV…VTMW).

This sequence belongs to the mitochondrial carrier (TC 2.A.29) family.

Its subcellular location is the mitochondrion inner membrane. Functionally, mitochondrial transporter that mediates uptake of thiamine pyrophosphate (ThPP) into mitochondria. This chain is Mitochondrial thiamine pyrophosphate carrier 1 (TPC1), found in Ajellomyces capsulatus (strain NAm1 / WU24) (Darling's disease fungus).